Here is a 537-residue protein sequence, read N- to C-terminus: Tyrosine-protein kinase Fyn (537 aa).

G2 carries N-myristoyl glycine lipidation. Residues C3 and C6 are each lipidated (S-palmitoyl cysteine). T12 bears the Phosphothreonine; by PKC mark. The region spanning 82–143 (TGVTLFVALY…PSNYVAPVDS (62 aa)) is the SH3 domain. The SH2 domain maps to 149 to 246 (WYFGKLGRKD…GLCCRLVVPC (98 aa)). Residues 271 to 524 (LQLIKRLGNG…YLQGFLEDYF (254 aa)) enclose the Protein kinase domain. Residues 277-285 (LGNGQFGEV) and K299 each bind ATP. The active-site Proton acceptor is the D390. A Phosphotyrosine; by autocatalysis modification is found at Y420. Y531 bears the Phosphotyrosine mark.

Belongs to the protein kinase superfamily. Tyr protein kinase family. SRC subfamily. Associates through its SH3 domain, to the p85 subunit of phosphatidylinositol 3-kinase. It depends on Mn(2+) as a cofactor.

The catalysed reaction is L-tyrosyl-[protein] + ATP = O-phospho-L-tyrosyl-[protein] + ADP + H(+). Inhibited by phosphorylation of Tyr-531 by leukocyte common antigen and activated by dephosphorylation of this site. Functionally, tyrosine-protein kinase implicated in the control of cell growth. Plays a role in the regulation of intracellular calcium levels. Required in brain development and mature brain function with important roles in the regulation of axon growth, axon guidance, and neurite extension. Blocks axon outgrowth and attraction induced by ntn1 by phosphorylating its receptor ddc. The sequence is that of Tyrosine-protein kinase Fyn (fyn) from Xenopus laevis (African clawed frog).